We begin with the raw amino-acid sequence, 614 residues long: Putative N(6)-adenosine-methyltransferase MT-A70-like (614 aa).

A disordered region spans residues 59 to 78; sequence TPPLTNFNPPKSSSLQQLPQ. Over residues 67-78 the composition is skewed to low complexity; sequence PPKSSSLQQLPQ. Residues 391–392 and D409 each bind S-adenosyl-L-methionine; that span reads DI. Positions 479-492 are positively charged region required for RNA-binding; it reads RIIRTGRTGHWLNH. S-adenosyl-L-methionine contacts are provided by residues K526, 549 to 552, and 562 to 563; these read RMHN and NQ. The disordered stretch occupies residues 589 to 614; the sequence is PASPSRASAMELDSSVAAQTTTSAMM. Polar residues predominate over residues 604 to 614; sequence VAAQTTTSAMM.

This sequence belongs to the MT-A70-like family.

The protein localises to the nucleus. It catalyses the reaction an adenosine in mRNA + S-adenosyl-L-methionine = an N(6)-methyladenosine in mRNA + S-adenosyl-L-homocysteine + H(+). Its function is as follows. Putative N6-methyltransferase that methylates adenosine residues of some mRNAs. N6-methyladenosine (m6A), which is present at internal sites of some mRNAs, may play a role in the efficiency of mRNA splicing, transport or translation. The polypeptide is Putative N(6)-adenosine-methyltransferase MT-A70-like (Medicago truncatula (Barrel medic)).